The primary structure comprises 349 residues: UDP-3-O-acylglucosamine N-acyltransferase (349 aa).

Histidine 240 serves as the catalytic Proton acceptor.

The protein belongs to the transferase hexapeptide repeat family. LpxD subfamily. In terms of assembly, homotrimer.

It carries out the reaction a UDP-3-O-[(3R)-3-hydroxyacyl]-alpha-D-glucosamine + a (3R)-hydroxyacyl-[ACP] = a UDP-2-N,3-O-bis[(3R)-3-hydroxyacyl]-alpha-D-glucosamine + holo-[ACP] + H(+). Its pathway is bacterial outer membrane biogenesis; LPS lipid A biosynthesis. Functionally, catalyzes the N-acylation of UDP-3-O-acylglucosamine using 3-hydroxyacyl-ACP as the acyl donor. Is involved in the biosynthesis of lipid A, a phosphorylated glycolipid that anchors the lipopolysaccharide to the outer membrane of the cell. The polypeptide is UDP-3-O-acylglucosamine N-acyltransferase (Porphyromonas gingivalis (strain ATCC 33277 / DSM 20709 / CIP 103683 / JCM 12257 / NCTC 11834 / 2561)).